Consider the following 102-residue polypeptide: Integration host factor subunit beta (102 aa).

This sequence belongs to the bacterial histone-like protein family. In terms of assembly, heterodimer of an alpha and a beta chain.

Its function is as follows. This protein is one of the two subunits of integration host factor, a specific DNA-binding protein that functions in genetic recombination as well as in transcriptional and translational control. The polypeptide is Integration host factor subunit beta (Marinomonas sp. (strain MWYL1)).